We begin with the raw amino-acid sequence, 410 residues long: Histone-lysine N-methyltransferase SUV39H2 (410 aa).

In terms of domain architecture, Chromo spans 47–105 (YEVEYLCDYKVVKDMEYYLVKWKGWPDSTNTWEPLQNLKCPLLLQQFSNDKHNYLSQVK). The Pre-SET domain maps to 189 to 247 (FGCSCTDCFFQKCCPAEAGVLLAYNKNQQIKIPPGTPIYECNSRCQCGPDCPNRIVQKG). Residues Cys191, Cys193, Cys196, Cys201, Cys202, Cys229, Cys233, Cys235, and Cys239 each coordinate Zn(2+). The SET domain occupies 250 to 373 (YSLCIFRTSN…AGEELTFDYQ (124 aa)). Residues 261–263 (RGW), Tyr304, and 330–331 (NH) each bind S-adenosyl-L-methionine. Zn(2+) is bound at residue Cys333. A phosphoserine mark is found at Ser381, Ser384, and Ser388. A Post-SET domain is found at 394-410 (VRTVCKCGAVTCRGYLN). Zn(2+) is bound by residues Cys398, Cys400, and Cys405.

This sequence belongs to the class V-like SAM-binding methyltransferase superfamily. Histone-lysine methyltransferase family. Suvar3-9 subfamily. As to quaternary structure, interacts with SMAD5. The large PER complex involved in the histone methylation is composed of at least PER2, CBX3, TRIM28, SUV39H1 and/or SUV39H2; CBX3 mediates the formation of the complex. In terms of processing, ubiquitinated by the DCX(DCAF13) E3 ubiquitin ligase complex, leading to its degradation.

The protein localises to the nucleus. Its subcellular location is the chromosome. It is found in the centromere. The catalysed reaction is L-lysyl(9)-[histone H3] + 3 S-adenosyl-L-methionine = N(6),N(6),N(6)-trimethyl-L-lysyl(9)-[histone H3] + 3 S-adenosyl-L-homocysteine + 3 H(+). Histone methyltransferase that specifically trimethylates 'Lys-9' of histone H3 using monomethylated H3 'Lys-9' as substrate. H3 'Lys-9' trimethylation represents a specific tag for epigenetic transcriptional repression by recruiting HP1 (CBX1, CBX3 and/or CBX5) proteins to methylated histones. Mainly functions in heterochromatin regions, thereby playing a central role in the establishment of constitutive heterochromatin at pericentric and telomere regions. H3 'Lys-9' trimethylation is also required to direct DNA methylation at pericentric repeats. SUV39H1 is targeted to histone H3 via its interaction with RB1 and is involved in many processes, such as cell cycle regulation, transcriptional repression and regulation of telomere length. May participate in regulation of higher-order chromatin organization during spermatogenesis. Recruited by the large PER complex to the E-box elements of the circadian target genes such as PER2 itself or PER1, contributes to the conversion of local chromatin to a heterochromatin-like repressive state through H3 'Lys-9' trimethylation. The sequence is that of Histone-lysine N-methyltransferase SUV39H2 (SUV39H2) from Macaca fascicularis (Crab-eating macaque).